Here is a 494-residue protein sequence, read N- to C-terminus: Aspartyl/glutamyl-tRNA(Asn/Gln) amidotransferase subunit B (494 aa).

This sequence belongs to the GatB/GatE family. GatB subfamily. As to quaternary structure, heterotrimer of A, B and C subunits.

The catalysed reaction is L-glutamyl-tRNA(Gln) + L-glutamine + ATP + H2O = L-glutaminyl-tRNA(Gln) + L-glutamate + ADP + phosphate + H(+). The enzyme catalyses L-aspartyl-tRNA(Asn) + L-glutamine + ATP + H2O = L-asparaginyl-tRNA(Asn) + L-glutamate + ADP + phosphate + 2 H(+). Functionally, allows the formation of correctly charged Asn-tRNA(Asn) or Gln-tRNA(Gln) through the transamidation of misacylated Asp-tRNA(Asn) or Glu-tRNA(Gln) in organisms which lack either or both of asparaginyl-tRNA or glutaminyl-tRNA synthetases. The reaction takes place in the presence of glutamine and ATP through an activated phospho-Asp-tRNA(Asn) or phospho-Glu-tRNA(Gln). The polypeptide is Aspartyl/glutamyl-tRNA(Asn/Gln) amidotransferase subunit B (Trichodesmium erythraeum (strain IMS101)).